Reading from the N-terminus, the 173-residue chain is MIDADGFRANVGIILANTQGQVLWAKRIGHNAWQFPQGGIDRGETPMDAMYRELWEEVGLHPRHVDLLAVTQDWLRYRLPKRYVRHGQYPLCIGQKQKWFLLRLDEPNTQHIRFDEGKPEFDNWQWVSYWYPLGQVIHFKRSVYRRALQELVPELPLQQGLIIPEQNNHLLVE.

One can recognise a Nudix hydrolase domain in the interval 6-149 (GFRANVGIIL…KRSVYRRALQ (144 aa)). Residues 38 to 59 (GGIDRGETPMDAMYRELWEEVG) carry the Nudix box motif.

The protein belongs to the Nudix hydrolase family. RppH subfamily. It depends on a divalent metal cation as a cofactor.

Functionally, accelerates the degradation of transcripts by removing pyrophosphate from the 5'-end of triphosphorylated RNA, leading to a more labile monophosphorylated state that can stimulate subsequent ribonuclease cleavage. This is RNA pyrophosphohydrolase from Psychrobacter cryohalolentis (strain ATCC BAA-1226 / DSM 17306 / VKM B-2378 / K5).